Reading from the N-terminus, the 255-residue chain is Imidazole glycerol phosphate synthase subunit HisF (255 aa).

Catalysis depends on residues Asp11 and Asp130.

It belongs to the HisA/HisF family. Heterodimer of HisH and HisF.

Its subcellular location is the cytoplasm. It catalyses the reaction 5-[(5-phospho-1-deoxy-D-ribulos-1-ylimino)methylamino]-1-(5-phospho-beta-D-ribosyl)imidazole-4-carboxamide + L-glutamine = D-erythro-1-(imidazol-4-yl)glycerol 3-phosphate + 5-amino-1-(5-phospho-beta-D-ribosyl)imidazole-4-carboxamide + L-glutamate + H(+). It participates in amino-acid biosynthesis; L-histidine biosynthesis; L-histidine from 5-phospho-alpha-D-ribose 1-diphosphate: step 5/9. Functionally, IGPS catalyzes the conversion of PRFAR and glutamine to IGP, AICAR and glutamate. The HisF subunit catalyzes the cyclization activity that produces IGP and AICAR from PRFAR using the ammonia provided by the HisH subunit. The chain is Imidazole glycerol phosphate synthase subunit HisF from Prochlorococcus marinus subsp. pastoris (strain CCMP1986 / NIES-2087 / MED4).